The sequence spans 307 residues: Putative S-adenosyl-L-methionine-dependent methyltransferase Mflv_5023 (307 aa).

S-adenosyl-L-methionine is bound by residues aspartate 133 and aspartate 162–leucine 163. The segment at serine 213 to lysine 234 is disordered.

The protein belongs to the UPF0677 family.

In terms of biological role, exhibits S-adenosyl-L-methionine-dependent methyltransferase activity. The polypeptide is Putative S-adenosyl-L-methionine-dependent methyltransferase Mflv_5023 (Mycolicibacterium gilvum (strain PYR-GCK) (Mycobacterium gilvum (strain PYR-GCK))).